Reading from the N-terminus, the 180-residue chain is Large ribosomal subunit protein uL6 (180 aa).

The protein belongs to the universal ribosomal protein uL6 family. In terms of assembly, part of the 50S ribosomal subunit.

Its function is as follows. This protein binds to the 23S rRNA, and is important in its secondary structure. It is located near the subunit interface in the base of the L7/L12 stalk, and near the tRNA binding site of the peptidyltransferase center. In Prosthecochloris aestuarii (strain DSM 271 / SK 413), this protein is Large ribosomal subunit protein uL6.